The sequence spans 260 residues: 5'-nucleotidase SurE (260 aa).

4 residues coordinate a divalent metal cation: aspartate 13, aspartate 14, serine 44, and asparagine 102.

Belongs to the SurE nucleotidase family. The cofactor is a divalent metal cation.

The protein resides in the cytoplasm. The catalysed reaction is a ribonucleoside 5'-phosphate + H2O = a ribonucleoside + phosphate. Nucleotidase that shows phosphatase activity on nucleoside 5'-monophosphates. This chain is 5'-nucleotidase SurE, found in Christiangramia forsetii (strain DSM 17595 / CGMCC 1.15422 / KT0803) (Gramella forsetii).